The sequence spans 749 residues: Poly(U)-binding-splicing factor rnp-6 (749 aa).

RRM domains follow at residues 102–176 (SRIY…LKVN) and 207–285 (FRVY…KCVT). Disordered stretches follow at residues 323 to 388 (AGSS…PDVV) and 457 to 480 (IEEE…KMKR). Positions 330-354 (PSESGGSRAASPAPRAQSPATPSSS) are enriched in low complexity. The region spanning 658-739 (NVIVLRNMVT…NTVKAEAYDQ (82 aa)) is the RRM 3; atypical domain.

This sequence belongs to the RRM half pint family.

It localises to the nucleus. In terms of biological role, DNA- and RNA-binding protein, involved in several nuclear processes such as pre-mRNA splicing, apoptosis and transcription regulation. Ensures the correct splicing of genes involved in immunity to promote longevity in response to infection by pathogenic bacteria such as S.aureus. The sequence is that of Poly(U)-binding-splicing factor rnp-6 from Caenorhabditis elegans.